The sequence spans 529 residues: Bifunctional purine biosynthesis protein PurH (529 aa).

An MGS-like domain is found at 2–149; it reads TDLSPVRRAL…KNHAFVNVVV (148 aa).

The protein belongs to the PurH family.

The catalysed reaction is (6R)-10-formyltetrahydrofolate + 5-amino-1-(5-phospho-beta-D-ribosyl)imidazole-4-carboxamide = 5-formamido-1-(5-phospho-D-ribosyl)imidazole-4-carboxamide + (6S)-5,6,7,8-tetrahydrofolate. It carries out the reaction IMP + H2O = 5-formamido-1-(5-phospho-D-ribosyl)imidazole-4-carboxamide. It participates in purine metabolism; IMP biosynthesis via de novo pathway; 5-formamido-1-(5-phospho-D-ribosyl)imidazole-4-carboxamide from 5-amino-1-(5-phospho-D-ribosyl)imidazole-4-carboxamide (10-formyl THF route): step 1/1. It functions in the pathway purine metabolism; IMP biosynthesis via de novo pathway; IMP from 5-formamido-1-(5-phospho-D-ribosyl)imidazole-4-carboxamide: step 1/1. The chain is Bifunctional purine biosynthesis protein PurH from Ruegeria pomeroyi (strain ATCC 700808 / DSM 15171 / DSS-3) (Silicibacter pomeroyi).